The primary structure comprises 569 residues: Arginine--tRNA ligase (569 aa).

Positions 123 to 133 (ANPNGPLHVGH) match the 'HIGH' region motif.

It belongs to the class-I aminoacyl-tRNA synthetase family.

Its subcellular location is the cytoplasm. The enzyme catalyses tRNA(Arg) + L-arginine + ATP = L-arginyl-tRNA(Arg) + AMP + diphosphate. The polypeptide is Arginine--tRNA ligase (Methanosarcina barkeri (strain Fusaro / DSM 804)).